The sequence spans 319 residues: HTH-type transcriptional regulator YidZ (319 aa).

The HTH lysR-type domain maps to Leu-8–Thr-65. The H-T-H motif DNA-binding region spans Val-25 to Ser-44.

It belongs to the LysR transcriptional regulatory family.

Its function is as follows. Involved in anaerobic NO protection. The polypeptide is HTH-type transcriptional regulator YidZ (Citrobacter koseri (strain ATCC BAA-895 / CDC 4225-83 / SGSC4696)).